We begin with the raw amino-acid sequence, 903 residues long: MATSADSPSSPLGAEDLLSDSSEPPGLNQVSSEVTSQLYASLRLSRQAEATARAQLYLPSTSPPHEGLDGFAQELSRSLSVGLEKNLKKKDGSKHIFEMESVRGQLQTMLQTSRDTAYRDPLIPGAGSERREEDSFDSDSTATLLNTRPLQDLSPSSSAQALEELFPRYTSLRPGPPLNPPDFQGLRDALDSEHTRRKHCERHIQSLQTRVLELQQQLAVAVAADRKKDTMIEQLDKTLARVVEGWNRHEAERTEVLRGLQEEHQAAELTRSKQQETVTRLEQSLSEAMEALNREQESARLQQRERETLEEERQALTLRLEAEQQRCCVLQEERDAARAGQLSEHRELETLRAALEEERQTWAQQEHQLKEHYQALQEESQAQLEREKEKSQREAQAAWETQHQLALVQSEVRRLEGELDTARRERDALQLEMSLVQARYESQRIQLESELAVQLEQRVTERLAQAQESSLRQAASLREHHRKQLQDLSGQHQQELASQLAQFKVEMAEREERQQQVAEDYELRLAREQARVCELQSGNQQLEEQRVELVERLQAMLQAHWDEANQLLSTTLPPPNPPAPPAGPSSPGPQEPEKEERRVWTMPPMAVALKPVLQQSREARDELPGAPPVLCSSSSDLSLLLGPSFQSQHSFQPLEPKPDLTSSTAGAFSALGAFHPDHRAERPFPEEDPGPDGEGLLKQGLPPAQLEGLKNFLHQLLETVPQNNENPSVDLLPPKSGPLTVPSWEEAPQVPRIPPPVHKTKVPLAMASSLFRVPEPPSSHSQGSGPSSGSPERGGDGLTFPRQLMEVSQLLRLYQARGWGALPAEDLLLYLKRLEHSGTDGRGDNVPRRNTDSRLGEIPRKEIPSQAVPRRLATAPKTEKPPARKKSGHPAPSSMRSRGGVWR.

Positions 1–10 (MATSADSPSS) are enriched in polar residues. Residues 1 to 34 (MATSADSPSSPLGAEDLLSDSSEPPGLNQVSSEV) form a disordered region. A Phosphoserine modification is found at serine 80. Disordered regions lie at residues 110–140 (LQTS…DSDS), 471–493 (LRQA…GQHQ), 568–597 (LSTT…KEER), 669–704 (SALG…LPPA), 772–799 (RVPE…DGLT), and 837–903 (SGTD…GVWR). Positions 196–560 (RRKHCERHIQ…ERLQAMLQAH (365 aa)) form a coiled coil. A required for centrosome localization region spans residues 365-903 (QEHQLKEHYQ…SMRSRGGVWR (539 aa)). Pro residues predominate over residues 572–590 (LPPPNPPAPPAGPSSPGPQ). A compositionally biased stretch (basic and acidic residues) spans 675 to 685 (HPDHRAERPFP). Positions 778–791 (SSHSQGSGPSSGSP) are enriched in low complexity. A Phosphoserine modification is found at serine 790. The span at 837-863 (SGTDGRGDNVPRRNTDSRLGEIPRKEI) shows a compositional bias: basic and acidic residues.

In terms of assembly, interacts with LYST. In terms of tissue distribution, widely expressed (at protein level). Highly expressed in testis. Also expressed in spleen, thymus, prostate, small intestine, colon and peripheral blood leukocytes.

It localises to the cytoplasm. Its subcellular location is the cytoskeleton. The protein localises to the microtubule organizing center. The protein resides in the centrosome. It is found in the centriole. Its function is as follows. Required for centriole duplication. Inhibition of centriole duplication leading to defects in cytokinesis. The sequence is that of Centrobin (CNTROB) from Homo sapiens (Human).